We begin with the raw amino-acid sequence, 447 residues long: NAC domain containing protein 50 (447 aa).

Positions 1–21 (MGRESLAVVSSPPSATAPSTA) are disordered. An NAC domain is found at 27-178 (LAPGFRFHPT…AYVLCRVFHK (152 aa)). Residues 126–184 (LGMKKTLVFHSGRAPDGLRTNWVMHEYRLVEYETETNGSLLQDAYVLCRVFHKNNIGPP) mediate DNA binding. 2 disordered regions span residues 246–303 (DATP…NKEA) and 371–392 (KENQ…EEKV). The segment covering 281–293 (TLKREHAEEDERP) has biased composition (basic and acidic residues). Residues 392–447 (VNDLQKEVHQMSVERETFKLEMMSAEAMISILQSRIDALRQENEELKKKNASGQAS) are a coiled coil.

Interacts with JMJ14 and NAC052. Mostly expressed in floral organs, and, at low levels, in other organs.

It is found in the nucleus. Transcriptional repressor that binds to the motif 5'-(C/T)A(C/A)G-3' in the promoter of target genes. Also binds to the 5'-CTTGNNNNNCAAG-3' consensus sequence in chromatin. Can bind to the mitochondrial dysfunction motif (MDM) present in the upstream regions of mitochondrial dysfunction stimulon (MDS) genes involved in mitochondrial retrograde regulation (MRR). Together with NAC051/NAC052 and JMJ14, regulates gene expression and flowering time by associating with the histone demethylase JMJ14, probably by the promotion of RNA-mediated gene silencing. In Arabidopsis thaliana (Mouse-ear cress), this protein is NAC domain containing protein 50.